Consider the following 138-residue polypeptide: Large ribosomal subunit protein bL19 (138 aa).

Belongs to the bacterial ribosomal protein bL19 family.

Its function is as follows. This protein is located at the 30S-50S ribosomal subunit interface and may play a role in the structure and function of the aminoacyl-tRNA binding site. This is Large ribosomal subunit protein bL19 from Rickettsia massiliae (strain Mtu5).